The primary structure comprises 328 residues: Peroxisomal adenine nucleotide transporter 1 (328 aa).

A run of 6 helical transmembrane segments spans residues 1 to 21, 78 to 98, 128 to 148, 185 to 202, 226 to 246, and 277 to 297; these read MLTLESALTGAVASAMANIAV, TVTTVATFVQNFVYFFWYTFI, LVLGVAAASISQLFTSPMAVV, LRTGLALTINPSITYASF, FILGVLSKMISTLVTQPLIVA, and WKGVLPQLTKGVIVQGLLFAF. Solcar repeat units follow at residues 1–101, 122–208, and 220–304; these read MLTL…IRKS, PSTI…LKEV, and LSAV…LTKS.

Belongs to the mitochondrial carrier (TC 2.A.29) family.

The protein localises to the peroxisome membrane. Functionally, adenine nucleotide transporter involved in the uniport of ATP and adenine nucleotide hetero-exchange transport between the cytosol and the peroxisomal lumen. This transport is accompanied by a proton transport from the peroxisomal lumen to the cytosol. Transport of ATP into the peroxisome is required for beta-oxidation of medium-chain fatty acids. Required for growth on medium-chain fatty acids, pH gradient formation in peroxisomes and for normal peroxisome proliferation. This Saccharomyces cerevisiae (strain ATCC 204508 / S288c) (Baker's yeast) protein is Peroxisomal adenine nucleotide transporter 1 (ANT1).